The primary structure comprises 365 residues: NAD(P)H-quinone oxidoreductase subunit 1, chloroplastic (365 aa).

6 helical membrane-spanning segments follow: residues 32 to 52 (LFPILILVLGITIGVLVIVWL), 98 to 118 (YLFSIGPSIAVISILLGYLII), 129 to 149 (LSIGVFLWIAVSSIAPIGLLM), 257 to 279 (LFYVASYLNLLISSLFVTVLYLG), 302 to 322 (VFGTTIGIFITLAKTFLFLFI), and 338 to 358 (LLNLGWKFLLPISLGNLLLTT).

The protein belongs to the complex I subunit 1 family. As to quaternary structure, NDH is composed of at least 16 different subunits, 5 of which are encoded in the nucleus.

The protein localises to the plastid. It localises to the chloroplast thylakoid membrane. The catalysed reaction is a plastoquinone + NADH + (n+1) H(+)(in) = a plastoquinol + NAD(+) + n H(+)(out). It carries out the reaction a plastoquinone + NADPH + (n+1) H(+)(in) = a plastoquinol + NADP(+) + n H(+)(out). Its function is as follows. NDH shuttles electrons from NAD(P)H:plastoquinone, via FMN and iron-sulfur (Fe-S) centers, to quinones in the photosynthetic chain and possibly in a chloroplast respiratory chain. The immediate electron acceptor for the enzyme in this species is believed to be plastoquinone. Couples the redox reaction to proton translocation, and thus conserves the redox energy in a proton gradient. The polypeptide is NAD(P)H-quinone oxidoreductase subunit 1, chloroplastic (Spinacia oleracea (Spinach)).